A 493-amino-acid chain; its full sequence is Tripartite motif-containing protein 5 (493 aa).

Ala-2 carries the N-acetylalanine modification. The segment at 15 to 59 adopts an RING-type zinc-finger fold; that stretch reads CPICLELLTQPLSLDCGHSFCQACLTANHKKSTLDKGERSCPVCR. Ser-86 is subject to Phosphoserine. The B box-type zinc finger occupies 90–132; it reads QKVDHCARHGEKLLLFCKEDGKVICWLCERSQEHRGHHTFLTE. The Zn(2+) site is built by Cys-95, His-98, Cys-117, and His-123. A coiled-coil region spans residues 131 to 223; it reads TEEVAQKYQV…LTKSETEMVQ (93 aa). The required for interaction with GABARAP and for autophagy stretch occupies residues 185–198; sequence FEQLRDILDWEESN. The 213-residue stretch at 281-493 folds into the B30.2/SPRY domain; it reads LKGMLEVFRE…VPMTLCSPSS (213 aa).

It belongs to the TRIM/RBCC family. As to quaternary structure, can form homodimers and homotrimers. In addition to lower-order dimerization, also exhibits a higher-order multimerization and both low- and high-order multimerizations are essential for its restriction activity. Interacts with BTBD1 and BTBD2. Interacts with PSMC4, PSMC5, PSMD7 and HSPA8/HSC70. Interacts (via B30.2/SPRY domain) with HSPA1A/B. Interacts with PSMC2, MAP3K7/TAK1, TAB2 and TAB3. Interacts with SQSTM1. Interacts with TRIM6 and TRIM34. Interacts with ULK1 (phosphorylated form), GABARAP, GABARAPL1, GABARAPL2, MAP1LC3A, MAP1LC3C and BECN1. Degraded in a proteasome-independent fashion in the absence of viral infection but in a proteasome-dependent fashion following exposure to restriction sensitive virus. In terms of processing, autoubiquitinated in a RING finger- and UBE2D2-dependent manner. Monoubiquitinated by TRIM21. Deubiquitinated by Yersinia YopJ. Ubiquitination may not lead to proteasomal degradation.

It is found in the cytoplasm. The protein resides in the nucleus. The enzyme catalyses S-ubiquitinyl-[E2 ubiquitin-conjugating enzyme]-L-cysteine + [acceptor protein]-L-lysine = [E2 ubiquitin-conjugating enzyme]-L-cysteine + N(6)-ubiquitinyl-[acceptor protein]-L-lysine.. It participates in protein modification; protein ubiquitination. Capsid-specific restriction factor that prevents infection from non-host-adapted retroviruses. Blocks viral replication early in the life cycle, after viral entry but before reverse transcription. In addition to acting as a capsid-specific restriction factor, also acts as a pattern recognition receptor that activates innate immune signaling in response to the retroviral capsid lattice. Binding to the viral capsid triggers its E3 ubiquitin ligase activity, and in concert with the heterodimeric ubiquitin conjugating enzyme complex UBE2V1-UBE2N (also known as UBC13-UEV1A complex) generates 'Lys-63'-linked polyubiquitin chains, which in turn are catalysts in the autophosphorylation of the MAP3K7/TAK1 complex (includes TAK1, TAB2, and TAB3). Activation of the MAP3K7/TAK1 complex by autophosphorylation results in the induction and expression of NF-kappa-B and MAPK-responsive inflammatory genes, thereby leading to an innate immune response in the infected cell. Plays a role in regulating autophagy through activation of autophagy regulator BECN1 by causing its dissociation from its inhibitors BCL2 and TAB2. This chain is Tripartite motif-containing protein 5 (TRIM5), found in Pongo abelii (Sumatran orangutan).